The following is a 387-amino-acid chain: MNGSRQYILAAGGTGGHMIPAHALAVELMRRGHHVALVTDERGTRFPELFKDVQIHQLPAGRLTGGVKGLFQAMRNIWAGRERALTLYENFTPAAVVGFGGYPALPALLAAFKAKIPTVIHEQNAVMGRTNRFLAGRVDAIATAYHQVDRLKKRYRRKTEVTGNPVRDEVLFLRDLPYPPLSDNSIFRILVVGGSQGASILSEVVPEGLGLLPLHLRRRLQVTQQCRPEDLEKTRAQYAKLGIPADISTYMADLPQRLGWSHLVISRAGASTIAELGVAGRPAILIPYPAAMDNHQYANARELVSAGGARLIDQRRFNPFELAKQIQKMALEPSALKNAAARARQVGYPDAVEKLADLVERVGGNLPQQNSIEEDSTFEKNQEGAVA.

UDP-N-acetyl-alpha-D-glucosamine-binding positions include 14-16 (TGG), Asn124, Arg167, Ser195, and Gln296. The disordered stretch occupies residues 366-387 (LPQQNSIEEDSTFEKNQEGAVA). Basic and acidic residues predominate over residues 377–387 (TFEKNQEGAVA).

It belongs to the glycosyltransferase 28 family. MurG subfamily.

It is found in the cell inner membrane. It carries out the reaction di-trans,octa-cis-undecaprenyl diphospho-N-acetyl-alpha-D-muramoyl-L-alanyl-D-glutamyl-meso-2,6-diaminopimeloyl-D-alanyl-D-alanine + UDP-N-acetyl-alpha-D-glucosamine = di-trans,octa-cis-undecaprenyl diphospho-[N-acetyl-alpha-D-glucosaminyl-(1-&gt;4)]-N-acetyl-alpha-D-muramoyl-L-alanyl-D-glutamyl-meso-2,6-diaminopimeloyl-D-alanyl-D-alanine + UDP + H(+). Its pathway is cell wall biogenesis; peptidoglycan biosynthesis. In terms of biological role, cell wall formation. Catalyzes the transfer of a GlcNAc subunit on undecaprenyl-pyrophosphoryl-MurNAc-pentapeptide (lipid intermediate I) to form undecaprenyl-pyrophosphoryl-MurNAc-(pentapeptide)GlcNAc (lipid intermediate II). The chain is UDP-N-acetylglucosamine--N-acetylmuramyl-(pentapeptide) pyrophosphoryl-undecaprenol N-acetylglucosamine transferase from Zymomonas mobilis subsp. mobilis (strain ATCC 31821 / ZM4 / CP4).